The following is a 444-amino-acid chain: MATSRAALCAVAVVCVVLAAACAPARAIHVGTPAAALFEEFKRTYGRAYETLAEEQQRLANFERNLELMREHQARNPHAQFGITKFFDLSEAEFAARYLNGAAYFAAAKRHAAQHYRKARADLSAVPDAVDWREKGAVTPVKDQGACGSCWAFSAVGNIEGQWYLAGHELVSLSEQQLVSCDDMNDGCDGGLMLQAFDWLLQNTNGHLHTEDSYPYVSGNGYVPECSNSSEELVVGAQIDGHVLIGSSEKAMAAWLAKNGPIAIALDASSFMSYKSGVLTACIGKQLNHGVLLVGYDMTGEVPYWVIKNSWGGDWGEQGYVRVVMGVNACLLSEYPVSAHVRESAAPGTSTSSETPAPRPVMVEQVICFDKNCTQGCRKTLIKANECHKNGGGGASMIKCSPQKVTMCTYSNEFCVGGGLCFETPDGKCAPYFLGSIMNTCHYT.

A signal peptide (or 27) is located at residues 1 to 19; sequence MATSRAALCAVAVVCVVLA. Positions 20–124 are cleaved as a propeptide — activation peptide; the sequence is AACAPARAIH…HYRKARADLS (105 aa). Cys147 and Cys188 form a disulfide bridge. Residue Cys150 is part of the active site. A glycan (N-linked (GlcNAc...) asparagine) is linked at Asn228. Residues His289 and Asn309 contribute to the active site. Asn372 is a glycosylation site (N-linked (GlcNAc...) asparagine).

Belongs to the peptidase C1 family.

The protein localises to the lysosome. The cysteine proteinases have a potential role in host-parasite interaction and virulence. In Leishmania pifanoi, this protein is Cysteine proteinase 2 (CYS2).